Here is a 617-residue protein sequence, read N- to C-terminus: Chaperone protein HscA homolog (617 aa).

This sequence belongs to the heat shock protein 70 family.

Its function is as follows. Probable chaperone. Has a low intrinsic ATPase activity which is markedly stimulated by HscB. The protein is Chaperone protein HscA homolog of Vibrio vulnificus (strain CMCP6).